A 244-amino-acid polypeptide reads, in one-letter code: Phosphonates import ATP-binding protein PhnC 2 (244 aa).

The region spanning 6–244 (IECHNLETAY…LQAQFVVNNQ (239 aa)) is the ABC transporter domain. 41 to 48 (GLNGAGKS) serves as a coordination point for ATP.

This sequence belongs to the ABC transporter superfamily. Phosphonates importer (TC 3.A.1.9.1) family. As to quaternary structure, the complex is composed of two ATP-binding proteins (PhnC), two transmembrane proteins (PhnE) and a solute-binding protein (PhnD).

Its subcellular location is the cell inner membrane. The enzyme catalyses phosphonate(out) + ATP + H2O = phosphonate(in) + ADP + phosphate + H(+). Part of the ABC transporter complex PhnCDE involved in phosphonates import. Responsible for energy coupling to the transport system. This chain is Phosphonates import ATP-binding protein PhnC 2, found in Nostoc sp. (strain PCC 7120 / SAG 25.82 / UTEX 2576).